We begin with the raw amino-acid sequence, 161 residues long: Nucleotide-binding protein XAC3671 (161 aa).

Belongs to the YajQ family.

Functionally, nucleotide-binding protein. This is Nucleotide-binding protein XAC3671 from Xanthomonas axonopodis pv. citri (strain 306).